Here is a 216-residue protein sequence, read N- to C-terminus: Peroxiredoxin (216 aa).

Residues 2–158 enclose the Thioredoxin domain; it reads VVIGEKFPEV…ILRLVKALKI (157 aa). The Cysteine sulfenic acid (-SOH) intermediate role is filled by Cys46. Position 121 (Arg121) interacts with substrate. Cysteines 205 and 211 form a disulfide.

It belongs to the peroxiredoxin family. Prx6 subfamily. As to quaternary structure, homodecamer. Pentamer of dimers that assemble into a ring structure.

The protein localises to the cytoplasm. It catalyses the reaction a hydroperoxide + [thioredoxin]-dithiol = an alcohol + [thioredoxin]-disulfide + H2O. Functionally, thiol-specific peroxidase that catalyzes the reduction of hydrogen peroxide and organic hydroperoxides to water and alcohols, respectively. Plays a role in cell protection against oxidative stress by detoxifying peroxides. The polypeptide is Peroxiredoxin (ahpC) (Pyrococcus horikoshii (strain ATCC 700860 / DSM 12428 / JCM 9974 / NBRC 100139 / OT-3)).